The sequence spans 660 residues: Bifunctional polymyxin resistance protein ArnA (660 aa).

The interval 1–304 is formyltransferase ArnAFT; sequence MKTVVFAYHD…MLGLVQGSRL (304 aa). Residue 86 to 88 coordinates (6R)-10-formyltetrahydrofolate; it reads HLI. The active-site Proton donor; for formyltransferase activity is H104. (6R)-10-formyltetrahydrofolate is bound by residues R114 and 136–140; that span reads VKRAD. Residues 314–660 form a dehydrogenase ArnADH region; that stretch reads RRTRVLILGV…RTVDLTDKPS (347 aa). Residues D347 and 368–369 each bind NAD(+); that span reads DI. UDP-alpha-D-glucuronate is bound by residues A393, Y398, and 432–433; that span reads TS. The active-site Proton acceptor; for decarboxylase activity is the E434. UDP-alpha-D-glucuronate is bound by residues R460, N492, 526–535, and Y613; that span reads KLIDGGKQKR. Catalysis depends on R619, which acts as the Proton donor; for decarboxylase activity.

The protein in the N-terminal section; belongs to the Fmt family. UDP-L-Ara4N formyltransferase subfamily. This sequence in the C-terminal section; belongs to the NAD(P)-dependent epimerase/dehydratase family. UDP-glucuronic acid decarboxylase subfamily. As to quaternary structure, homohexamer, formed by a dimer of trimers.

It catalyses the reaction UDP-alpha-D-glucuronate + NAD(+) = UDP-beta-L-threo-pentopyranos-4-ulose + CO2 + NADH. It carries out the reaction UDP-4-amino-4-deoxy-beta-L-arabinose + (6R)-10-formyltetrahydrofolate = UDP-4-deoxy-4-formamido-beta-L-arabinose + (6S)-5,6,7,8-tetrahydrofolate + H(+). Its pathway is nucleotide-sugar biosynthesis; UDP-4-deoxy-4-formamido-beta-L-arabinose biosynthesis; UDP-4-deoxy-4-formamido-beta-L-arabinose from UDP-alpha-D-glucuronate: step 1/3. It participates in nucleotide-sugar biosynthesis; UDP-4-deoxy-4-formamido-beta-L-arabinose biosynthesis; UDP-4-deoxy-4-formamido-beta-L-arabinose from UDP-alpha-D-glucuronate: step 3/3. It functions in the pathway bacterial outer membrane biogenesis; lipopolysaccharide biosynthesis. Functionally, bifunctional enzyme that catalyzes the oxidative decarboxylation of UDP-glucuronic acid (UDP-GlcUA) to UDP-4-keto-arabinose (UDP-Ara4O) and the addition of a formyl group to UDP-4-amino-4-deoxy-L-arabinose (UDP-L-Ara4N) to form UDP-L-4-formamido-arabinose (UDP-L-Ara4FN). The modified arabinose is attached to lipid A and is required for resistance to polymyxin and cationic antimicrobial peptides. The sequence is that of Bifunctional polymyxin resistance protein ArnA from Shigella flexneri serotype 5b (strain 8401).